The sequence spans 270 residues: Protein N-terminal and lysine N-methyltransferase EFM7 (270 aa).

Residues M1–K45 are disordered. Residues W63, G89 to A91, D111, W158, and S182 each bind S-adenosyl-L-methionine.

This sequence belongs to the class I-like SAM-binding methyltransferase superfamily. EFM7 family.

It is found in the cytoplasm. Functionally, S-adenosyl-L-methionine-dependent protein methyltransferase that trimethylates the N-terminal glycine 'Gly-2' of elongation factor 1-alpha, before also catalyzing the mono- and dimethylation of 'Lys-3'. The polypeptide is Protein N-terminal and lysine N-methyltransferase EFM7 (Kluyveromyces lactis (strain ATCC 8585 / CBS 2359 / DSM 70799 / NBRC 1267 / NRRL Y-1140 / WM37) (Yeast)).